The chain runs to 284 residues: Probable palmitoyltransferase ZDHHC24 (284 aa).

The Cytoplasmic segment spans residues methionine 1–proline 18. A helical transmembrane segment spans residues valine 19–leucine 39. The Extracellular segment spans residues glycine 40 to alanine 52. The helical transmembrane segment at leucine 53–leucine 73 threads the bilayer. The Cytoplasmic segment spans residues arginine 74–arginine 137. One can recognise a DHHC domain in the interval alanine 94–leucine 144. Residue cysteine 124 is the S-palmitoyl cysteine intermediate of the active site. A helical transmembrane segment spans residues proline 138–serine 158. Residues proline 159–glutamine 166 lie on the Extracellular side of the membrane. A helical membrane pass occupies residues alanine 167–glycine 187. Residues lysine 188–alanine 195 lie on the Cytoplasmic side of the membrane. Residues leucine 196–phenylalanine 216 form a helical membrane-spanning segment. Topologically, residues histidine 217–serine 284 are extracellular.

Belongs to the DHHC palmitoyltransferase family.

It is found in the membrane. It catalyses the reaction L-cysteinyl-[protein] + hexadecanoyl-CoA = S-hexadecanoyl-L-cysteinyl-[protein] + CoA. In terms of biological role, probable palmitoyltransferase that could catalyze the addition of palmitate onto various protein substrates. The protein is Probable palmitoyltransferase ZDHHC24 (Zdhhc24) of Rattus norvegicus (Rat).